The following is a 365-amino-acid chain: Caffeic acid 3-O-methyltransferase (365 aa).

Asparagine 131 is a binding site for (E)-ferulate. S-adenosyl-L-homocysteine contacts are provided by glycine 208, aspartate 231, aspartate 251, methionine 252, methionine 264, and lysine 265. Histidine 269 acts as the Proton acceptor in catalysis. Residue aspartate 270 coordinates (E)-5-hydroxyferulate. Residues glutamate 297 and glutamate 329 contribute to the active site.

The protein belongs to the class I-like SAM-binding methyltransferase superfamily. Cation-independent O-methyltransferase family. COMT subfamily. In terms of assembly, homodimer. As to expression, more abundant in roots and stems.

It catalyses the reaction (E)-caffeate + S-adenosyl-L-methionine = (E)-ferulate + S-adenosyl-L-homocysteine + H(+). The catalysed reaction is (E)-5-hydroxyferulate + S-adenosyl-L-methionine = (E)-sinapate + S-adenosyl-L-homocysteine + H(+). The protein operates within aromatic compound metabolism; phenylpropanoid biosynthesis. In terms of biological role, catalyzes the conversion of caffeic acid to ferulic acid and of 5-hydroxyferulic acid to sinapic acid. The resulting products may subsequently be converted to the corresponding alcohols that are incorporated into lignins. The protein is Caffeic acid 3-O-methyltransferase of Medicago sativa (Alfalfa).